A 466-amino-acid chain; its full sequence is Glycine--tRNA ligase (466 aa).

The substrate site is built by R104 and E178. Residues 210 to 212, 220 to 225, 294 to 295, and 338 to 341 contribute to the ATP site; these read RNE, FRTREF, EL, and GADR. Substrate is bound at residue 225–229; it reads FEQME. 334 to 338 provides a ligand contact to substrate; that stretch reads EPSLG.

This sequence belongs to the class-II aminoacyl-tRNA synthetase family. In terms of assembly, homodimer.

Its subcellular location is the cytoplasm. The enzyme catalyses tRNA(Gly) + glycine + ATP = glycyl-tRNA(Gly) + AMP + diphosphate. Functionally, catalyzes the attachment of glycine to tRNA(Gly). The sequence is that of Glycine--tRNA ligase from Geobacillus thermodenitrificans (strain NG80-2).